The following is a 332-amino-acid chain: Sesquiterpene synthase MBR_10393 (332 aa).

Asp91 and Asp96 together coordinate Mg(2+). The short motif at 91–96 is the DDXXXD motif element; sequence DDLFVD. A substrate-binding site is contributed by Arg184. Residues Asn230, Ser234, and Glu238 each coordinate Mg(2+).

Belongs to the terpene synthase family. The cofactor is Mg(2+).

The enzyme catalyses (2E,6E)-farnesyl diphosphate + H2O = (+)-corvol ether B + diphosphate. It carries out the reaction (2E,6E)-farnesyl diphosphate + H2O = (+)-corvol ether A + diphosphate. Functionally, terpene synthase that catalyzes the conversion of (2E,6E)-farnesyl diphosphate (FPP) into sesquiterpenes which are important for fungi-environment interactions. Produces a mixture consisting of 8 sesquiterpenes including corvol ethers A and B, as well as traces of epizonarene, gamma-cadinene, delta-cadinene, alpha-cadinene, alpha-cadinol, and an unidentified sesquiterpene. The major product is corvol ether B. The chain is Sesquiterpene synthase MBR_10393 from Metarhizium brunneum (strain ARSEF 3297).